The primary structure comprises 82 residues: uncharacterized protein (82 aa).

This is an uncharacterized protein from Sinorhizobium fredii (strain NBRC 101917 / NGR234).